Reading from the N-terminus, the 232-residue chain is Uracil-DNA glycosylase (232 aa).

D64 serves as the catalytic Proton acceptor.

This sequence belongs to the uracil-DNA glycosylase (UDG) superfamily. UNG family.

It localises to the cytoplasm. It carries out the reaction Hydrolyzes single-stranded DNA or mismatched double-stranded DNA and polynucleotides, releasing free uracil.. In terms of biological role, excises uracil residues from the DNA which can arise as a result of misincorporation of dUMP residues by DNA polymerase or due to deamination of cytosine. This Shouchella clausii (strain KSM-K16) (Alkalihalobacillus clausii) protein is Uracil-DNA glycosylase.